The primary structure comprises 483 residues: CBL-interacting serine/threonine-protein kinase 19 (483 aa).

The Protein kinase domain maps to 28–282 (YEMGRLLGHG…MPDIMETSWF (255 aa)). Residues 34 to 42 (LGHGTFAKV) and Lys-57 contribute to the ATP site. Residue Asp-150 is the Proton acceptor of the active site. Residues 168-197 (DFGLSAVSDQIRQDGLFHTFCGTPAYVAPE) are activation loop. Residue Ser-172 is modified to Phosphoserine. Residue Thr-186 is modified to Phosphothreonine. A compositionally biased stretch (polar residues) spans 313 to 322 (SVSGRSSTVS). The tract at residues 313 to 338 (SVSGRSSTVSEPEDFESFDGRRRGGS) is disordered. Positions 340-364 (PRPASLNAFDLISFSPGFDLSGLFE) constitute an NAF domain. The PPI stretch occupies residues 367–396 (GEGSRFVSGAPVGQIISKLEEIARIVSFTV). The segment at 459–483 (NLSSENGQRVSGSRSLPSFLLSDTD) is disordered.

Belongs to the protein kinase superfamily. CAMK Ser/Thr protein kinase family. SNF1 subfamily. Requires Mn(2+) as cofactor.

The catalysed reaction is L-seryl-[protein] + ATP = O-phospho-L-seryl-[protein] + ADP + H(+). It catalyses the reaction L-threonyl-[protein] + ATP = O-phospho-L-threonyl-[protein] + ADP + H(+). In terms of biological role, CIPK serine-threonine protein kinases interact with CBL proteins. Binding of a CBL protein to the regulatory NAF domain of CIPK protein lead to the activation of the kinase in a calcium-dependent manner. The chain is CBL-interacting serine/threonine-protein kinase 19 (CIPK19) from Arabidopsis thaliana (Mouse-ear cress).